We begin with the raw amino-acid sequence, 346 residues long: Uroporphyrinogen decarboxylase (346 aa).

Residues 26 to 30, Asp-76, Tyr-153, Ser-208, and His-323 each bind substrate; that span reads RQAGR.

Belongs to the uroporphyrinogen decarboxylase family. As to quaternary structure, homodimer.

The protein localises to the cytoplasm. The catalysed reaction is uroporphyrinogen III + 4 H(+) = coproporphyrinogen III + 4 CO2. It participates in porphyrin-containing compound metabolism; protoporphyrin-IX biosynthesis; coproporphyrinogen-III from 5-aminolevulinate: step 4/4. Catalyzes the decarboxylation of four acetate groups of uroporphyrinogen-III to yield coproporphyrinogen-III. This Prochlorococcus marinus (strain MIT 9515) protein is Uroporphyrinogen decarboxylase.